The chain runs to 1173 residues: MSNLPKPASHFEPEKNVDDKGNVTGSAPPVSKDTPTQQASVSLPNQEEPTQQTLVTTELPTKPDYNDLLLKASDERLLLVKEAKPQTLRFYASPTGLTASGFSIVTSPTSSYEQHAIDIFPYNCPVDKIVPAFTLEQIKITNDVLSSAQQSYLSRIPHDTSLVKLNEIEVVTGGSRDLFSLGTGYVMVVPNAEFFEGANLKFVYGVPMADIIFSKLTSQSAADYAFLDRSRIASGFIMFALHFALRTNVNLVVTKDNSARFASELSYSRPMSFVQGKKIVLPVQPHVCFAEGNSLMRYLDTALEGKYTQGVTYKYGRERIITETKEGGPITEITYLNIDNVTAQALGITAHVIGIDRYREDNVKRALLAYSLSGSTVDLMQSDESERMFGRMLSPQQELSYLLVGAALSQDVYKTILRANLDAFMMFGTVMPSLSDSLAKIPADAGNQQIISLIRERQSVSGFENAMEYLAMQVTPPLIWPCVISREVNVTGLSLLIMLLEYILFFIFYPSLAKKCGAGLCNNFYKLVFALSNSEWSQFVTRVGYDGTLGNSIPITDEDYWSNARRPALFTTDLSQFRLLGLIQRLIAPIGEHREHVKAQAAEFPRLKARTEYWNPYPNPGAQHVEQTIFKARLLQAFDETLTLVKDLNQTGQLVSKTLMAGVAKVFNTCKIKLRYHGVGFGRDIGMPLAYLRDRKINFYHDYDGRLDTPFPNQMMLVSASQSPHDHKIPIELRRKGQIVLETGVVWTLVLGLQFPSHQFDEDMTNDPICKFRAPSPGEELGKDDTIIAMCANACVPFSIAAGIISESYADGGMKEIKELLSGSLSSTEFRNLISCIQTAMQGSGFNVGRNRDVFRQNETVDLRFIEPKVRYVENELTIIAPTPQDPPIIRGDLQLIPEGLMPRFRLGLTAIADSSSEYSRLRKGLYLARCEVDVEAPNNALPLDLRDYVEVEYSHDLFQVRRIQTKQALGIFYQGEFYYRPALVPKMLIVVNTSEEMEPSYQEFFMQCLEERRIVIKLPKMYFLSRIVCTHSIQRPDERDAVLGLLAVRNDQIPLVTFYDTEQVDPTIQFDGLASGSKSKFIWPISSIDQNVVVRALGASGSTAPIGFAAPTDSMCDSGSIDDVGNLTTGAGVLKDPRVISLTNGVINYTERANLTGRVLYRYRPAYALDSY.

Positions 1 to 53 (MSNLPKPASHFEPEKNVDDKGNVTGSAPPVSKDTPTQQASVSLPNQEEPTQQT) are disordered. Over residues 9 to 21 (SHFEPEKNVDDKG) the composition is skewed to basic and acidic residues. A compositionally biased stretch (polar residues) spans 33 to 53 (DTPTQQASVSLPNQEEPTQQT).

It belongs to the turreted BTV-fold inner capsid family. Homodecamer; each decamer is made up of two conformers of VP2, called VP2A and VP2B. 12 homodecamers assemble to form an icosahedral capsid.

It is found in the virion. In terms of biological role, inner capsid protein that self-assembles to form an icosahedral capsid with a T=2 symmetry, which consists of 120 copies of VP2, with channels at each of its five-fold vertices. This capsid constitutes the innermost concentric layer of the viral mature particle. The polypeptide is Inner capsid protein VP3 (Rice ragged stunt virus (isolate Thailand) (RRSV)).